Reading from the N-terminus, the 241-residue chain is Trypsin-10 (241 aa).

Residues 1–13 (MKSLIFVLLLGAV) form the signal peptide. The propeptide at 14–19 (FAEEDK) is activation peptide. The Peptidase S1 domain occupies 20–239 (IVGGYECTRH…LSGWVRDTMA (220 aa)). Cystine bridges form between Cys-26/Cys-155, Cys-44/Cys-60, Cys-128/Cys-228, Cys-135/Cys-201, Cys-166/Cys-180, and Cys-191/Cys-215. Active-site charge relay system residues include His-59 and Asp-103. The active-site Charge relay system is Ser-195.

It belongs to the peptidase S1 family.

It localises to the secreted. The protein resides in the extracellular space. The enzyme catalyses Preferential cleavage: Arg-|-Xaa, Lys-|-Xaa.. This is Trypsin-10 from Gadus morhua (Atlantic cod).